Reading from the N-terminus, the 227-residue chain is uncharacterized protein (227 aa).

A signal peptide spans 1 to 23 (MKKLTVTFLTFISIFFAATAAFA).

This is an uncharacterized protein from Coxiella burnetii (strain RSA 493 / Nine Mile phase I).